A 157-amino-acid polypeptide reads, in one-letter code: Regulatory protein RecX (157 aa).

It belongs to the RecX family.

The protein localises to the cytoplasm. Its function is as follows. Modulates RecA activity. The protein is Regulatory protein RecX of Leptothrix cholodnii (strain ATCC 51168 / LMG 8142 / SP-6) (Leptothrix discophora (strain SP-6)).